The sequence spans 798 residues: Gelsolin (798 aa).

Positions Met-1–Ala-28 are cleaved as a signal peptide. Residues Arg-57–Phe-181 form an actin-severing region. One copy of the Gelsolin-like 1 repeat lies at Glu-78–Gly-131. Tyr-90 bears the Phosphotyrosine; by SRC mark. The actin-actin interfilament contact point stretch occupies residues Asp-128–Gly-131. A 1,2-diacyl-sn-glycero-3-phospho-(1D-myo-inositol-4,5-bisphosphate) is bound by residues Lys-167 to Gln-174 and Arg-193 to Arg-201. Gelsolin-like repeat units lie at residues Val-203–Leu-243, Leu-322–Thr-365, Ile-474–Lys-524, and Val-583–Gln-625. Positions Met-451–Ile-792 are actin-binding, Ca-sensitive. Residue Asp-599 participates in Ca(2+) binding. Tyr-612 carries the phosphotyrosine; by SRC modification. A Ca(2+)-binding site is contributed by Glu-623. Residue Tyr-662 is modified to Phosphotyrosine; by SRC. The stretch at Leu-689 to Gly-730 is one Gelsolin-like 6 repeat. Ca(2+)-binding residues include Asp-705, Asp-706, and Glu-728.

The protein belongs to the villin/gelsolin family. As to quaternary structure, binds to actin and to fibronectin. In terms of tissue distribution, isoform 1 and isoform 2 are ubiquitously expressed in early embryo. Isoform 1 is expressed in the fat body, and is abundant in hemolymph. Isoform 2 is expressed in parts of the gut.

The protein resides in the cytoplasm. It localises to the cytoskeleton. It is found in the secreted. Functionally, calcium-regulated, actin-modulating protein that binds to the plus (or barbed) ends of actin monomers or filaments, preventing monomer exchange (end-blocking or capping). It can promote the assembly of monomers into filaments (nucleation) as well as sever filaments already formed. In Drosophila melanogaster (Fruit fly), this protein is Gelsolin (Gel).